Here is a 402-residue protein sequence, read N- to C-terminus: UPF0597 protein THA_1286 (402 aa).

The protein belongs to the UPF0597 family.

The protein is UPF0597 protein THA_1286 of Thermosipho africanus (strain TCF52B).